The sequence spans 66 residues: Cadmium-metallothionein (66 aa).

At Ser1 the chain carries N-acetylserine. 18 residues coordinate Cd(2+): Cys9, Cys13, Cys18, Cys20, Cys24, Cys26, Cys30, Cys32, Cys35, Cys38, Cys40, Cys45, Cys47, Cys51, Cys57, Cys59, Cys63, and Cys65.

This sequence belongs to the metallothionein superfamily. Type 2 family.

Functionally, the metallothioneins are involved in the cellular sequestration of toxic metal ions and regulation of essential trace elements. Binds almost exclusively cadmium. In Helix pomatia (Roman snail), this protein is Cadmium-metallothionein.